Here is a 594-residue protein sequence, read N- to C-terminus: MKLLNYALVYRRFLLVVFTILVFLPLPLIIRTKEAQCAYILFVIAIFWITEALPLSITALLPGLMFPMFGIMRSSQVASAYFKDFHLLLIGVICLATSIEKWNLHKRIALRMVMMVGVNPAWLTLGFMSSTAFLSMWLSNTSTAAMVMPIVEAVAQQIISAEAEAEATQMTYFNESAAHGLDIDETVIGQETNEKKEKTKPAPGSSHDKGKVSRKMETEKNAVTGAKYRSRKDHMMCKLMCLSVAYSSTIGGLTTITGTSTNLIFSEHFNTRYPDCRCLNFGSWFLFSFPVALILLLLSWIWLQWLYLGFDFKMFKCGKTKTLKEKACAKVIKQEYEKLGPMRYQEIVTLVIFIVMALLWFSRDPGFVTGWSVLFSEYPGYVTDSTVALVAGILFFLIPAKKVTKMTSAGEIIAFDYTPLITWKEFQSFMPWDIAILVGGGFALADGCQVSGLSNWIGSKLSPLGSLPVWLIILISSLIVTSLTEVASNPATITILFPILSPLAEAIQVNPLQILLPSTLCTSFAFLLPVANPPNAIVFSYGHLKVIDMVKAGLGVNILGVAVVMLGMFTWIEPMFNLHEYPSWASNFVNQTMP.

A run of 5 helical transmembrane segments spans residues 13-33 (FLLV…IRTK), 40-60 (ILFV…ITAL), 77-97 (VASA…CLAT), 113-133 (VMMV…STAF), and 134-154 (LSMW…VEAV). Asparagine 174 carries an N-linked (GlcNAc...) asparagine glycan. The span at 192–220 (TNEKKEKTKPAPGSSHDKGKVSRKMETEK) shows a compositional bias: basic and acidic residues. The tract at residues 192-226 (TNEKKEKTKPAPGSSHDKGKVSRKMETEKNAVTGA) is disordered. A run of 8 helical transmembrane segments spans residues 239 to 259 (LMCL…ITGT), 283 to 303 (SWFL…WIWL), 347 to 367 (IVTL…DPGF), 380 to 400 (GYVT…LIPA), 461 to 481 (LSPL…LIVT), 487 to 507 (ASNP…AEAI), 511 to 531 (PLQI…LPVA), and 552 to 572 (AGLG…FTWI). Residue asparagine 590 is glycosylated (N-linked (GlcNAc...) asparagine).

The protein belongs to the SLC13A/DASS transporter (TC 2.A.47) family. NADC subfamily. Highly expressed in kidney and ileum, detected at lower levels in duodenum/jejunum and colon, and at very low levels in cecum, testis, adrenal and adipose tissues. As to expression, expressed in the kidney.

The protein resides in the apical cell membrane. It catalyses the reaction sulfate(out) + 3 Na(+)(out) = sulfate(in) + 3 Na(+)(in). The catalysed reaction is selenate(out) + 3 Na(+)(out) = selenate(in) + 3 Na(+)(in). The enzyme catalyses thiosulfate(out) + 3 Na(+)(out) = thiosulfate(in) + 3 Na(+)(in). Sodium:sulfate symporter that mediates sulfate reabsorption in the kidney and small intestine. Can also mediate the transport of selenate and thiosulfate. The chain is Solute carrier family 13 member 1 (Slc13a1) from Mus musculus (Mouse).